The sequence spans 98 residues: NADH-ubiquinone oxidoreductase chain 4L (98 aa).

Transmembrane regions (helical) follow at residues 1–21 (MTHIMFTFSTAFMLGLSGLTF), 26–46 (LLSALLCLEGMMLSLFIALAM), and 59–79 (APLLLLALSACEAGLGLSLLV).

Belongs to the complex I subunit 4L family.

Its subcellular location is the mitochondrion membrane. The enzyme catalyses a ubiquinone + NADH + 5 H(+)(in) = a ubiquinol + NAD(+) + 4 H(+)(out). Functionally, core subunit of the mitochondrial membrane respiratory chain NADH dehydrogenase (Complex I) which catalyzes electron transfer from NADH through the respiratory chain, using ubiquinone as an electron acceptor. Part of the enzyme membrane arm which is embedded in the lipid bilayer and involved in proton translocation. This Polypterus ornatipinnis (Ornate bichir) protein is NADH-ubiquinone oxidoreductase chain 4L (MT-ND4L).